Consider the following 162-residue polypeptide: Photosystem II extrinsic protein V (162 aa).

The N-terminal stretch at 1 to 26 (MFNKNFWTSIIIGCLFCTITYSGVNA) is a signal peptide. Residues Cys62, Cys65, His66, and His117 each contribute to the heme c site.

The protein belongs to the cytochrome c family. PsbV subfamily. In terms of assembly, PSII is composed of 1 copy each of membrane proteins PsbA, PsbB, PsbC, PsbD, PsbE, PsbF, PsbH, PsbI, PsbJ, PsbK, PsbL, PsbM, PsbT, PsbX, PsbY, PsbZ, Psb30/Ycf12, at least 3 peripheral proteins of the oxygen-evolving complex and a large number of cofactors. It forms dimeric complexes. Requires heme c as cofactor.

Its subcellular location is the plastid. It is found in the cyanelle thylakoid membrane. Its function is as follows. One of the extrinsic, lumenal subunits of photosystem II (PSII). PSII is a light-driven water plastoquinone oxidoreductase, using light energy to abstract electrons from H(2)O, generating a proton gradient subsequently used for ATP formation. The extrinsic proteins stabilize the structure of photosystem II oxygen-evolving complex (OEC), the ion environment of oxygen evolution and protect the OEC against heat-induced inactivation. This chain is Photosystem II extrinsic protein V, found in Cyanophora paradoxa.